Consider the following 779-residue polypeptide: Cysteine-rich protein 2-binding protein (779 aa).

Residues 1 to 34 form a disordered region; that stretch reads MDSSIHLSGLLSRHDDDATRTSTSEGLEEGEVEG. The residue at position 4 (serine 4) is a Phosphoserine. An N6-acetyllysine modification is found at lysine 230. 3 disordered regions span residues 247-292, 314-345, and 360-457; these read SRNP…PVKF, LSSSDRTPLTSPSPSPSLDFSAPGTPASHSAT, and PPQA…GPRY. A compositionally biased stretch (basic and acidic residues) spans 255 to 275; that stretch reads MELKEKRSRTQEAKDIRRAQK. Serine 284 carries the phosphoserine modification. Lysine 291 is subject to N6-acetyllysine. Over residues 314–334 the composition is skewed to low complexity; the sequence is LSSSDRTPLTSPSPSPSLDFS. 2 stretches are compositionally biased toward basic and acidic residues: residues 402-423 and 443-452; these read RAPEQIKQEVDSEEEKPDRMDG and KPPLEKDMKP. Serine 413 carries the phosphoserine modification. Residues 635-779 form the N-acetyltransferase domain; that stretch reads LDYCYVRPNH…KHAFFLRLRR (145 aa).

Interacts with the LIM 1 domain of CSRP2. Component of the ADA2A-containing complex (ATAC), composed of CSRP2BP, KAT2A, TADA2L, TADA3L, ZZ3, MBIP, WDR5, YEATS2, CCDC101 and DR1. In the complex, it probably interacts directly with KAT2A, MBIP and WDR5.

Its subcellular location is the nucleus. The protein resides in the cytoplasm. Its function is as follows. Component of the ATAC complex, a complex with histone acetyltransferase activity on histones H3 and H4. May function as a scaffold for the ATAC complex to promote ATAC complex stability. Has also weak histone acetyltransferase activity toward histone H4. Required for the normal progression through G1 and G2/M phases of the cell cycle. This Mus musculus (Mouse) protein is Cysteine-rich protein 2-binding protein.